A 60-amino-acid chain; its full sequence is Cytochrome c oxidase assembly protein COX14 homolog (60 aa).

A helical membrane pass occupies residues valine 10 to valine 32.

The protein resides in the mitochondrion membrane. Its function is as follows. Plays a role in the assembly or stability of the cytochrome c oxidase complex (COX). In Danio rerio (Zebrafish), this protein is Cytochrome c oxidase assembly protein COX14 homolog.